The primary structure comprises 214 residues: Uridine kinase (214 aa).

15-22 provides a ligand contact to ATP; that stretch reads GASASGKS.

The protein belongs to the uridine kinase family.

The protein resides in the cytoplasm. It catalyses the reaction uridine + ATP = UMP + ADP + H(+). The catalysed reaction is cytidine + ATP = CMP + ADP + H(+). It functions in the pathway pyrimidine metabolism; CTP biosynthesis via salvage pathway; CTP from cytidine: step 1/3. The protein operates within pyrimidine metabolism; UMP biosynthesis via salvage pathway; UMP from uridine: step 1/1. This chain is Uridine kinase, found in Tolumonas auensis (strain DSM 9187 / NBRC 110442 / TA 4).